The sequence spans 292 residues: Ribonuclease HIII (292 aa).

Positions 76 to 292 constitute an RNase H type-2 domain; the sequence is TNLIGTDEVG…TQKAIKIAQL (217 aa). Positions 82, 83, and 186 each coordinate a divalent metal cation.

Belongs to the RNase HII family. RnhC subfamily. Mn(2+) serves as cofactor. It depends on Mg(2+) as a cofactor.

The protein localises to the cytoplasm. The enzyme catalyses Endonucleolytic cleavage to 5'-phosphomonoester.. Functionally, endonuclease that specifically degrades the RNA of RNA-DNA hybrids. In Lactococcus lactis subsp. lactis (strain IL1403) (Streptococcus lactis), this protein is Ribonuclease HIII.